A 130-amino-acid polypeptide reads, in one-letter code: Iron-sulfur cluster insertion protein ErpA (130 aa).

Positions 58, 122, and 124 each coordinate iron-sulfur cluster.

The protein belongs to the HesB/IscA family. As to quaternary structure, homodimer. It depends on iron-sulfur cluster as a cofactor.

Functionally, required for insertion of 4Fe-4S clusters for at least IspG. In Stenotrophomonas maltophilia (strain K279a), this protein is Iron-sulfur cluster insertion protein ErpA.